The following is a 394-amino-acid chain: 1-deoxy-D-xylulose 5-phosphate reductoisomerase (394 aa).

Threonine 13, glycine 14, threonine 15, isoleucine 16, and asparagine 125 together coordinate NADPH. Residue lysine 126 coordinates 1-deoxy-D-xylulose 5-phosphate. Glutamate 127 contributes to the NADPH binding site. A Mn(2+)-binding site is contributed by aspartate 151. Serine 152, glutamate 153, serine 182, and histidine 205 together coordinate 1-deoxy-D-xylulose 5-phosphate. Glutamate 153 is a Mn(2+) binding site. An NADPH-binding site is contributed by glycine 211. The 1-deoxy-D-xylulose 5-phosphate site is built by serine 218, asparagine 223, lysine 224, and glutamate 227. Glutamate 227 contacts Mn(2+).

This sequence belongs to the DXR family. It depends on Mg(2+) as a cofactor. Mn(2+) serves as cofactor.

It carries out the reaction 2-C-methyl-D-erythritol 4-phosphate + NADP(+) = 1-deoxy-D-xylulose 5-phosphate + NADPH + H(+). The protein operates within isoprenoid biosynthesis; isopentenyl diphosphate biosynthesis via DXP pathway; isopentenyl diphosphate from 1-deoxy-D-xylulose 5-phosphate: step 1/6. Catalyzes the NADPH-dependent rearrangement and reduction of 1-deoxy-D-xylulose-5-phosphate (DXP) to 2-C-methyl-D-erythritol 4-phosphate (MEP). The sequence is that of 1-deoxy-D-xylulose 5-phosphate reductoisomerase from Methylobacillus flagellatus (strain ATCC 51484 / DSM 6875 / VKM B-1610 / KT).